We begin with the raw amino-acid sequence, 695 residues long: Probable serine/threonine-protein kinase abkD (695 aa).

Residues 105-119 (TTKPQPCQAKPPSSK) are compositionally biased toward polar residues. The interval 105–149 (TTKPQPCQAKPPSSKQQQQQQQQQQQQQQQQQQQQSKKKTSKDRL) is disordered. Residues 118–150 (SKQQQQQQQQQQQQQQQQQQQQSKKKTSKDRLR) are a coiled coil. Low complexity predominate over residues 120-139 (QQQQQQQQQQQQQQQQQQQQ). The chain crosses the membrane as a helical span at residues 177–193 (TIASILAAIALIIYSYE). The region spanning 317–695 (DFDRLPIAAA…LIKDQMKKLG (379 aa)) is the Protein kinase domain. ATP-binding positions include 323–331 (IAAASLAQV) and lysine 345. Aspartate 477 functions as the Proton acceptor in the catalytic mechanism.

Belongs to the protein kinase superfamily. ADCK protein kinase family.

The protein resides in the membrane. This chain is Probable serine/threonine-protein kinase abkD (abkD), found in Dictyostelium discoideum (Social amoeba).